Reading from the N-terminus, the 549-residue chain is Hydroxylamine reductase (549 aa).

The [4Fe-4S] cluster site is built by C5, C8, C17, and C23. 8 residues coordinate hybrid [4Fe-2O-2S] cluster: H244, E268, C312, C403, C431, C456, E491, and K493. C403 carries the cysteine persulfide modification.

Belongs to the HCP family. [4Fe-4S] cluster is required as a cofactor. The cofactor is hybrid [4Fe-2O-2S] cluster.

Its subcellular location is the cytoplasm. It catalyses the reaction A + NH4(+) + H2O = hydroxylamine + AH2 + H(+). Catalyzes the reduction of hydroxylamine to form NH(3) and H(2)O. This is Hydroxylamine reductase from Caldanaerobacter subterraneus subsp. tengcongensis (strain DSM 15242 / JCM 11007 / NBRC 100824 / MB4) (Thermoanaerobacter tengcongensis).